The primary structure comprises 450 residues: UDP-N-acetylglucosamine--peptide N-acetylglucosaminyltransferase stabilizing protein GtfB (450 aa).

The protein belongs to the GtfB family. Forms a heterotetramer with 2 subunits each of GtfA and GtfB. Part of the accessory SecA2/SecY2 protein translocation apparatus required to export cell wall protein GspB.

It is found in the cell membrane. Its pathway is protein modification; protein glycosylation. Functionally, required for polymorphic O-glycosylation of GspB, a serine-rich repeat cell wall protein encoded upstream in the same operon. A substrate-binding protein that is part of the accessory SecA2/SecY2 system specifically required to export GspB. The GtfA-GtfB complex adds GlcNAc from UDP-GlcNAc to GspB, attaching the first sugar residue. Upon coexpression in E.coli with GtfA glycosylates GspB constructs. Binds the GspB protein substrate; alone this subunit only recognizes partially glycosylated GspB, but is constrained by GtfA to also recognize unglycosylated protein. The enzyme probably modifies its tertiary conformation by opening and closing its intersubunit interfaces to accomodate the increasingly glycosylated substrate. This is UDP-N-acetylglucosamine--peptide N-acetylglucosaminyltransferase stabilizing protein GtfB from Streptococcus gordonii.